Reading from the N-terminus, the 77-residue chain is Protein NS4 (77 aa).

It is found in the host cytoplasm. Its subcellular location is the host nucleus. The protein resides in the host nucleolus. Its function is as follows. May function as a nucleic acid binding protein that modulates transcription of genes participating in the IFN response. The protein is Protein NS4 (Segment-9) of Antilocapra americana (Pronghorn).